The following is a 209-amino-acid chain: Pyridoxal 5'-phosphate synthase subunit PdxT (209 aa).

58–60 is a binding site for L-glutamine; the sequence is GES. The active-site Nucleophile is the Cys90. L-glutamine is bound by residues Arg119 and 148–149; that span reads IR. Catalysis depends on charge relay system residues His185 and Glu187.

The protein belongs to the glutaminase PdxT/SNO family. In the presence of PdxS, forms a dodecamer of heterodimers. Only shows activity in the heterodimer.

It catalyses the reaction aldehydo-D-ribose 5-phosphate + D-glyceraldehyde 3-phosphate + L-glutamine = pyridoxal 5'-phosphate + L-glutamate + phosphate + 3 H2O + H(+). It carries out the reaction L-glutamine + H2O = L-glutamate + NH4(+). Its pathway is cofactor biosynthesis; pyridoxal 5'-phosphate biosynthesis. Catalyzes the hydrolysis of glutamine to glutamate and ammonia as part of the biosynthesis of pyridoxal 5'-phosphate. The resulting ammonia molecule is channeled to the active site of PdxS. The protein is Pyridoxal 5'-phosphate synthase subunit PdxT of Clavibacter michiganensis subsp. michiganensis (strain NCPPB 382).